A 193-amino-acid polypeptide reads, in one-letter code: Protein PrsJ (193 aa).

The signal sequence occupies residues 1–27; it reads MVVNKTTAVLYLIALSLSGFIHTFLRA.

It localises to the periplasm. This protein maintains pilus integrity and thus is an important participant in pilus assembly. It may function as molecular chaperone directly or indirectly in the correct assembly of PapA subunits. The sequence is that of Protein PrsJ (prsJ) from Escherichia coli.